The sequence spans 363 residues: tRNA dimethylallyltransferase (363 aa).

The interval 1 to 55 (MLACNDDTSLYLLVKQVTKKEIYSNDLENGNVKRGASMQSLYLIGDPKCCRNNSS) is unknown insert. 65–72 (GPTASGKS) contributes to the ATP binding site. 67 to 72 (TASGKS) lines the substrate pocket. Interaction with substrate tRNA stretches follow at residues 90-93 (DSMQ) and 214-218 (QRLIR).

Belongs to the IPP transferase family. As to quaternary structure, monomer. The cofactor is Mg(2+).

The catalysed reaction is adenosine(37) in tRNA + dimethylallyl diphosphate = N(6)-dimethylallyladenosine(37) in tRNA + diphosphate. In terms of biological role, catalyzes the transfer of a dimethylallyl group onto the adenine at position 37 in tRNAs that read codons beginning with uridine, leading to the formation of N6-(dimethylallyl)adenosine (i(6)A). In Rickettsia conorii (strain ATCC VR-613 / Malish 7), this protein is tRNA dimethylallyltransferase.